The following is a 156-amino-acid chain: Small ribosomal subunit protein uS7 (156 aa).

This sequence belongs to the universal ribosomal protein uS7 family. As to quaternary structure, part of the 30S ribosomal subunit. Contacts proteins S9 and S11.

Its function is as follows. One of the primary rRNA binding proteins, it binds directly to 16S rRNA where it nucleates assembly of the head domain of the 30S subunit. Is located at the subunit interface close to the decoding center, probably blocks exit of the E-site tRNA. The sequence is that of Small ribosomal subunit protein uS7 from Pectobacterium carotovorum subsp. carotovorum (strain PC1).